Here is a 391-residue protein sequence, read N- to C-terminus: Matrix metalloproteinase-23 (391 aa).

The Cytoplasmic portion of the chain corresponds to 1-19 (MGWRACLRPEASGAVQGRW). Positions 1–79 (MGWRACLRPE…LSMLVTRRRR (79 aa)) are excised as a propeptide. A helical; Signal-anchor for type II membrane protein membrane pass occupies residues 20–38 (LGAVLSGLCLLSALAFLEW). The Lumenal portion of the chain corresponds to 39–391 (LGSPTETAWN…TYSWRVRVRS (353 aa)). 2 N-linked (GlcNAc...) asparagine glycosylation sites follow: N93 and N149. H212 contributes to the Zn(2+) binding site. E213 is a catalytic residue. Zn(2+) contacts are provided by H216 and H222. Residue N233 is glycosylated (N-linked (GlcNAc...) asparagine). Residues 256-290 (CLDRIFVCTSWARKGFCDVRQRLMKRLCPRSCDFC) form the ShKT domain. Disulfide bonds link C256/C290, C263/C283, and C272/C287. Residues 296–381 (PTVATTTSPT…VVRHRQRVLT (86 aa)) form the Ig-like C2-type domain. N-linked (GlcNAc...) asparagine glycosylation is present at N317. A disulfide bridge connects residues C322 and C371.

It belongs to the peptidase M10A family. The cofactor is Zn(2+). Post-translationally, N-glycosylated. Proteolytic cleavage might yield an active form. Expressed at the highest levels in ovary and uterus. In ovary expression is strictly confined to granulosa cells of preantral and small antral follicles. Detected also in testis and prostate.

It is found in the membrane. It localises to the endoplasmic reticulum membrane. Its activity is regulated as follows. Inhibited by TIMP2. Protease. May regulate the surface expression of some potassium channels by retaining them in the endoplasmic reticulum. This Rattus norvegicus (Rat) protein is Matrix metalloproteinase-23 (Mmp23).